Reading from the N-terminus, the 222-residue chain is N-(5'-phosphoribosyl)anthranilate isomerase (222 aa).

Belongs to the TrpF family.

The enzyme catalyses N-(5-phospho-beta-D-ribosyl)anthranilate = 1-(2-carboxyphenylamino)-1-deoxy-D-ribulose 5-phosphate. Its pathway is amino-acid biosynthesis; L-tryptophan biosynthesis; L-tryptophan from chorismate: step 3/5. The protein is N-(5'-phosphoribosyl)anthranilate isomerase of Xanthomonas campestris pv. campestris (strain 8004).